A 154-amino-acid polypeptide reads, in one-letter code: Myoglobin (154 aa).

In terms of domain architecture, Globin spans 2–148 (GLSDQEWQHV…FRNDMASKYK (147 aa)). Residue histidine 65 coordinates nitrite. O2 is bound at residue histidine 65. Histidine 94 provides a ligand contact to heme b.

Belongs to the globin family. Monomeric.

It localises to the cytoplasm. The protein localises to the sarcoplasm. It carries out the reaction Fe(III)-heme b-[protein] + nitric oxide + H2O = Fe(II)-heme b-[protein] + nitrite + 2 H(+). The catalysed reaction is H2O2 + AH2 = A + 2 H2O. Monomeric heme protein which primary function is to store oxygen and facilitate its diffusion within muscle tissues. Reversibly binds oxygen through a pentacoordinated heme iron and enables its timely and efficient release as needed during periods of heightened demand. Depending on the oxidative conditions of tissues and cells, and in addition to its ability to bind oxygen, it also has a nitrite reductase activity whereby it regulates the production of bioactive nitric oxide. Under stress conditions, like hypoxia and anoxia, it also protects cells against reactive oxygen species thanks to its pseudoperoxidase activity. The sequence is that of Myoglobin (MB) from Uria lomvia (Thick-billed murre).